A 226-amino-acid polypeptide reads, in one-letter code: Uracil-DNA glycosylase (226 aa).

Asp65 serves as the catalytic Proton acceptor.

Belongs to the uracil-DNA glycosylase (UDG) superfamily. UNG family.

It is found in the cytoplasm. It carries out the reaction Hydrolyzes single-stranded DNA or mismatched double-stranded DNA and polynucleotides, releasing free uracil.. In terms of biological role, excises uracil residues from the DNA which can arise as a result of misincorporation of dUMP residues by DNA polymerase or due to deamination of cytosine. The protein is Uracil-DNA glycosylase of Enterococcus faecalis (strain ATCC 700802 / V583).